The following is a 92-amino-acid chain: Co-chaperonin GroES (92 aa).

The protein belongs to the GroES chaperonin family. In terms of assembly, heptamer of 7 subunits arranged in a ring. Interacts with the chaperonin GroEL.

It localises to the cytoplasm. Together with the chaperonin GroEL, plays an essential role in assisting protein folding. The GroEL-GroES system forms a nano-cage that allows encapsulation of the non-native substrate proteins and provides a physical environment optimized to promote and accelerate protein folding. GroES binds to the apical surface of the GroEL ring, thereby capping the opening of the GroEL channel. The chain is Co-chaperonin GroES from Methanosarcina barkeri (strain Fusaro / DSM 804).